Consider the following 509-residue polypeptide: Cruciferin CRU1 (509 aa).

The signal sequence occupies residues 1 to 23 (MVKVPHLLVATFGVLLVLNGCLA). A disulfide bond links Cys-37 and Cys-70. Residues 42–271 (LDVLQPTETI…ALKIDVRLAQ (230 aa)) form the Cupin type-1 1 domain. Phosphoserine is present on residues Ser-53 and Ser-97. Cys-113 and Cys-326 form a disulfide bridge. A Phosphothreonine modification is found at Thr-116. Disordered stretches follow at residues 119–175 (DSQP…GFRD), 230–249 (RLAGNNPQGGSQQQQQQQQN), and 301–321 (YESEQWRHPRGPPQSPQDNGL). Over residues 124–172 (QGQQQGQPWQGQQGQQGQQGQQGQQGQQGQQGQQGQQGQQGQQGQQQQG) the composition is skewed to low complexity. In terms of domain architecture, Cupin type-1 2 spans 332 to 481 (ENIDDPARAD…AFQISLEEAR (150 aa)). Residue Ser-352 is modified to Phosphoserine. Phosphothreonine is present on residues Thr-445 and Thr-487.

The protein belongs to the 11S seed storage protein (globulins) family. Hexamer; each subunit is composed of an acidic and a basic chain derived from a single precursor and linked by a disulfide bond.

Its function is as follows. This is a seed storage protein. This is Cruciferin CRU1 (CRU1) from Brassica napus (Rape).